The chain runs to 485 residues: Aspartyl/glutamyl-tRNA(Asn/Gln) amidotransferase subunit B (485 aa).

Belongs to the GatB/GatE family. GatB subfamily. As to quaternary structure, heterotrimer of A, B and C subunits.

The enzyme catalyses L-glutamyl-tRNA(Gln) + L-glutamine + ATP + H2O = L-glutaminyl-tRNA(Gln) + L-glutamate + ADP + phosphate + H(+). It catalyses the reaction L-aspartyl-tRNA(Asn) + L-glutamine + ATP + H2O = L-asparaginyl-tRNA(Asn) + L-glutamate + ADP + phosphate + 2 H(+). In terms of biological role, allows the formation of correctly charged Asn-tRNA(Asn) or Gln-tRNA(Gln) through the transamidation of misacylated Asp-tRNA(Asn) or Glu-tRNA(Gln) in organisms which lack either or both of asparaginyl-tRNA or glutaminyl-tRNA synthetases. The reaction takes place in the presence of glutamine and ATP through an activated phospho-Asp-tRNA(Asn) or phospho-Glu-tRNA(Gln). The chain is Aspartyl/glutamyl-tRNA(Asn/Gln) amidotransferase subunit B from Borrelia turicatae (strain 91E135).